The sequence spans 122 residues: Small ribosomal subunit protein uS13 (122 aa).

Residues 95–122 (GLPVRGQRTHTNARTRKGPAKSIAGKKK) are disordered.

This sequence belongs to the universal ribosomal protein uS13 family. In terms of assembly, part of the 30S ribosomal subunit. Forms a loose heterodimer with protein S19. Forms two bridges to the 50S subunit in the 70S ribosome.

In terms of biological role, located at the top of the head of the 30S subunit, it contacts several helices of the 16S rRNA. In the 70S ribosome it contacts the 23S rRNA (bridge B1a) and protein L5 of the 50S subunit (bridge B1b), connecting the 2 subunits; these bridges are implicated in subunit movement. Contacts the tRNAs in the A and P-sites. This is Small ribosomal subunit protein uS13 from Nitrobacter hamburgensis (strain DSM 10229 / NCIMB 13809 / X14).